Reading from the N-terminus, the 682-residue chain is Potassium-transporting ATPase ATP-binding subunit (682 aa).

Helical transmembrane passes span 34 to 54, 62 to 82, 219 to 239, and 254 to 274; these read PVMF…IAMA, ALFS…ANFA, IALT…TATL, and VLVA…LSAI. D307 serves as the catalytic 4-aspartylphosphate intermediate. Residues D344, E348, 377–384, and K395 each bind ATP; that span reads FTAQSRMS. D518 and D522 together coordinate Mg(2+). Helical transmembrane passes span 588 to 608, 616 to 636, and 656 to 676; these read FAII…LNIM, AILS…PLAL, and IYGL…DLLL.

The protein belongs to the cation transport ATPase (P-type) (TC 3.A.3) family. Type IA subfamily. The system is composed of three essential subunits: KdpA, KdpB and KdpC.

It localises to the cell inner membrane. It carries out the reaction K(+)(out) + ATP + H2O = K(+)(in) + ADP + phosphate + H(+). Functionally, part of the high-affinity ATP-driven potassium transport (or Kdp) system, which catalyzes the hydrolysis of ATP coupled with the electrogenic transport of potassium into the cytoplasm. This subunit is responsible for energy coupling to the transport system and for the release of the potassium ions to the cytoplasm. The protein is Potassium-transporting ATPase ATP-binding subunit of Escherichia coli (strain UTI89 / UPEC).